We begin with the raw amino-acid sequence, 85 residues long: Large ribosomal subunit protein bL27 (85 aa).

The segment at 1 to 21 is disordered; the sequence is MAHKKAGGSTRNGRDSRGKRL.

This sequence belongs to the bacterial ribosomal protein bL27 family.

This is Large ribosomal subunit protein bL27 from Blochmanniella floridana.